Consider the following 248-residue polypeptide: Probable transcriptional regulatory protein P9303_05381 (248 aa).

It belongs to the TACO1 family.

The protein localises to the cytoplasm. This chain is Probable transcriptional regulatory protein P9303_05381, found in Prochlorococcus marinus (strain MIT 9303).